Here is a 141-residue protein sequence, read N- to C-terminus: Small ribosomal subunit protein eS17z (141 aa).

It belongs to the eukaryotic ribosomal protein eS17 family.

The protein is Small ribosomal subunit protein eS17z (RPS17A) of Arabidopsis thaliana (Mouse-ear cress).